The sequence spans 977 residues: Ephrin type-A receptor 1 (977 aa).

An N-terminal signal peptide occupies residues 1-26 (MERRWPLGLALLLLLLCAPLPPGARA). Residues 27–548 (EEVTLMDTST…PVSRSLTGGE (522 aa)) lie on the Extracellular side of the membrane. An Eph LBD domain is found at 28–210 (EVTLMDTSTA…FYQRCAETVH (183 aa)). 2 consecutive Fibronectin type-III domains span residues 333–446 (PPSA…MGHA) and 448–539 (SLSG…TSPP). Asn-415 and Asn-479 each carry an N-linked (GlcNAc...) asparagine glycan. A helical transmembrane segment spans residues 549–569 (IVAVIFGLLLGIALLIGIYVF). Over 570–977 (RSRRGQRQRQ…ILCSIQGFKD (408 aa)) the chain is Cytoplasmic. Phosphotyrosine; by autocatalysis occurs at positions 600 and 606. The Protein kinase domain occupies 625-885 (LIVDTVIGEG…QLQAHLEQLL (261 aa)). ATP is bound by residues 631 to 639 (IGEGEFGEV) and Lys-657. Catalysis depends on Asp-750, which acts as the Proton acceptor. Residue Tyr-782 is modified to Phosphotyrosine; by autocatalysis. Ser-907 and Ser-911 each carry phosphoserine. Residues 914–977 (IPYRSVSEWL…ILCSIQGFKD (64 aa)) form the SAM domain. The PDZ-binding signature appears at 975 to 977 (FKD).

The protein belongs to the protein kinase superfamily. Tyr protein kinase family. Ephrin receptor subfamily. As to quaternary structure, homodimer. Forms a signaling complex with LCK; PTK2B/PYK2 and PI3-kinase upon activation by EFNA1; regulates T-lymphocytes migration. Interacts (via SAM domain) with ILK (via ANK repeats); stimulated by EFNA1 but independent of the kinase activity of EPHA1. Interacts (kinase activity-dependent) with PTK2/FAK1. In terms of processing, phosphorylated. Autophosphorylation is stimulated by its ligand EFNA1. Ubiquitinated. As to expression, preferentially expressed in epithelial cells including skin, kidney, liver and thymus. Expressed in myogenic progenitor cells.

It localises to the cell membrane. The catalysed reaction is L-tyrosyl-[protein] + ATP = O-phospho-L-tyrosyl-[protein] + ADP + H(+). In terms of biological role, receptor tyrosine kinase which binds promiscuously membrane-bound ephrin-A family ligands residing on adjacent cells, leading to contact-dependent bidirectional signaling into neighboring cells. The signaling pathway downstream of the receptor is referred to as forward signaling while the signaling pathway downstream of the ephrin ligand is referred to as reverse signaling. Binds with a low affinity EFNA3 and EFNA4 and with a high affinity to EFNA1 which most probably constitutes its cognate/functional ligand. Upon activation by EFNA1 induces cell attachment to the extracellular matrix inhibiting cell spreading and motility through regulation of ILK and downstream RHOA and RAC. Also plays a role in angiogenesis and regulates cell proliferation. May play a role in apoptosis. The protein is Ephrin type-A receptor 1 (Epha1) of Mus musculus (Mouse).